A 391-amino-acid chain; its full sequence is uncharacterized protein (391 aa).

In terms of domain architecture, OBG-type G spans 85-314 (ATAAFVGFPS…LKEKIYEKLG (230 aa)). GTP is bound by residues 91–98 (GFPSVGKS), 137–141 (DAPGI), and 267–270 (NKID). One can recognise a TGS domain in the interval 314-389 (GFIKIYLKPQ…EDGDILTIVI (76 aa)).

The protein belongs to the TRAFAC class OBG-HflX-like GTPase superfamily. OBG GTPase family.

This is an uncharacterized protein from Methanocaldococcus jannaschii (strain ATCC 43067 / DSM 2661 / JAL-1 / JCM 10045 / NBRC 100440) (Methanococcus jannaschii).